The primary structure comprises 695 residues: GRB2-associated-binding protein 1 (695 aa).

Ser-2 is subject to N-acetylserine. Positions 5–116 (EVVCSGWLRK…WVRCICDICG (112 aa)) constitute a PH domain. The segment at 204 to 229 (AKPTFSETDCNDNVPSHQTPASSQSK) is disordered. Over residues 206 to 229 (PTFSETDCNDNVPSHQTPASSQSK) the composition is skewed to polar residues. Residues Ser-251, Ser-253, Ser-266, and Ser-304 each carry the phosphoserine modification. The tract at residues 306-387 (SYDIPPTPGN…PAGMTPSRSN (82 aa)) is disordered. Residues 314-334 (GNTYQIPRTFPESTLGQSSKL) are compositionally biased toward polar residues. Thr-388 is modified (phosphothreonine). Residues Ser-403 and Ser-455 each carry the phosphoserine modification. The segment at 453 to 659 (PNSPPRQHSG…GSSMADERVD (207 aa)) is disordered. Polar residues-rich tracts occupy residues 457–466 (PRQHSGSFTE) and 605–617 (FASNSLDGGSSPM). Tyr-628 is subject to Phosphotyrosine. Thr-639 carries the post-translational modification Phosphothreonine. Ser-652 is subject to Phosphoserine. Position 660 is a phosphotyrosine (Tyr-660). The interval 671–695 (LKSTREAWTDGRQSTESETPTKNVK) is disordered. Over residues 673-685 (STREAWTDGRQST) the composition is skewed to basic and acidic residues. The residue at position 684 (Ser-684) is a Phosphoserine. Positions 686–695 (ESETPTKNVK) are enriched in polar residues.

It belongs to the GAB family. Identified in a complex containing FRS2, GRB2, GAB1, PIK3R1 and SOS1. Forms a tripartite complex containing GAB1, METTL13 and SPRY2. Within the complex interacts with METTL13. Interacts with GRB2 and with other SH2-containing proteins. Interacts with phosphorylated LAT2. Interacts with PTPRJ. Interacts (phosphorylated) with PTPN11. Interacts with HCK. Phosphorylated on tyrosine residue(s) by the epidermal growth factor receptor (EGFR) and the insulin receptor (INSR). Tyrosine phosphorylation of GAB1 mediates interaction with several proteins that contain SH2 domains. Phosphorylated on tyrosine residues by HCK upon IL6 signaling. Phosphorylated in response to FGFR1 activation. As to expression, expressed in the inner ear (at protein level). Expression is detected in the cochlear duct, spiral limbus region, efferent and afferent nerves, and in spiral ganglion neurons (at protein level).

Its function is as follows. Adapter protein that plays a role in intracellular signaling cascades triggered by activated receptor-type kinases. Plays a role in FGFR1 signaling. Probably involved in signaling by the epidermal growth factor receptor (EGFR) and the insulin receptor (INSR). Involved in the MET/HGF-signaling pathway. The protein is GRB2-associated-binding protein 1 (Gab1) of Mus musculus (Mouse).